A 642-amino-acid polypeptide reads, in one-letter code: Chaperone protein DnaK (642 aa).

Position 199 is a phosphothreonine; by autocatalysis (T199). Residues 570–585 (EELEQASKDGDKEAID) are compositionally biased toward basic and acidic residues. The tract at residues 570–642 (EELEQASKDG…FEEVKDDDKK (73 aa)) is disordered. Positions 600-620 (EAAQQQQAQQGAEGAAGGEQQ) are enriched in low complexity. Residues 627–642 (DVVDAEFEEVKDDDKK) are compositionally biased toward acidic residues.

The protein belongs to the heat shock protein 70 family.

In terms of biological role, acts as a chaperone. This Idiomarina loihiensis (strain ATCC BAA-735 / DSM 15497 / L2-TR) protein is Chaperone protein DnaK.